We begin with the raw amino-acid sequence, 430 residues long: Phosphomethylpyrimidine synthase (430 aa).

Substrate is bound by residues Asn-67, Met-96, Tyr-125, His-161, 183–185, 224–227, and Glu-263; these read SRG and DALR. Position 267 (His-267) interacts with Zn(2+). Tyr-290 is a binding site for substrate. A Zn(2+)-binding site is contributed by His-331. Residues Cys-406, Cys-409, and Cys-413 each coordinate [4Fe-4S] cluster.

The protein belongs to the ThiC family. Homodimer. [4Fe-4S] cluster is required as a cofactor.

The catalysed reaction is 5-amino-1-(5-phospho-beta-D-ribosyl)imidazole + S-adenosyl-L-methionine = 4-amino-2-methyl-5-(phosphooxymethyl)pyrimidine + CO + 5'-deoxyadenosine + formate + L-methionine + 3 H(+). It functions in the pathway cofactor biosynthesis; thiamine diphosphate biosynthesis. Its function is as follows. Catalyzes the synthesis of the hydroxymethylpyrimidine phosphate (HMP-P) moiety of thiamine from aminoimidazole ribotide (AIR) in a radical S-adenosyl-L-methionine (SAM)-dependent reaction. The sequence is that of Phosphomethylpyrimidine synthase from Campylobacter jejuni (strain RM1221).